The chain runs to 185 residues: Hypoxanthine/guanine phosphoribosyltransferase (185 aa).

The protein belongs to the purine/pyrimidine phosphoribosyltransferase family. Archaeal HPRT subfamily. In terms of assembly, homodimer.

The protein resides in the cytoplasm. It carries out the reaction IMP + diphosphate = hypoxanthine + 5-phospho-alpha-D-ribose 1-diphosphate. The enzyme catalyses GMP + diphosphate = guanine + 5-phospho-alpha-D-ribose 1-diphosphate. Its pathway is purine metabolism; IMP biosynthesis via salvage pathway; IMP from hypoxanthine: step 1/1. Its function is as follows. Catalyzes a salvage reaction resulting in the formation of IMP that is energically less costly than de novo synthesis. The polypeptide is Hypoxanthine/guanine phosphoribosyltransferase (Methanococcus maripaludis (strain C6 / ATCC BAA-1332)).